Here is a 280-residue protein sequence, read N- to C-terminus: MQNSKYCEKKIHIALFGNPIEHSLSPLIHKNFSKEIKINYNYNSFLCTKSNFFVIVKNFFQNGGFGCNITVPFKKKSFQISNKNTKYVKISNSVNVLKKSSNNNIIGYNTDGIGLIYDLNRLKYITENSFILILGSGGAVYSIVYHLLKKKCCIFILNRTISKSCILVNKFKKFGKIFVFDKNLYTKKFDIIINATSCGLYNFSPKFPKNLIFPNTKCYDISYSKNKKLTPFLSTCRDLGSRKYSDGLGMLVAQAAYSCYIWFNILPNIKKNINLLKSII.

Shikimate contacts are provided by residues 23–25 (SLS) and Thr-70. The active-site Proton acceptor is Lys-74. Residues Asn-95 and Asp-111 each contribute to the shikimate site. NADP(+) is bound by residues 135–139 (GSGGA), 158–163 (NRTISK), and Ile-221. Tyr-223 lines the shikimate pocket. Gly-247 provides a ligand contact to NADP(+).

It belongs to the shikimate dehydrogenase family. In terms of assembly, homodimer.

The catalysed reaction is shikimate + NADP(+) = 3-dehydroshikimate + NADPH + H(+). It functions in the pathway metabolic intermediate biosynthesis; chorismate biosynthesis; chorismate from D-erythrose 4-phosphate and phosphoenolpyruvate: step 4/7. In terms of biological role, involved in the biosynthesis of the chorismate, which leads to the biosynthesis of aromatic amino acids. Catalyzes the reversible NADPH linked reduction of 3-dehydroshikimate (DHSA) to yield shikimate (SA). This Buchnera aphidicola subsp. Cinara cedri (strain Cc) protein is Shikimate dehydrogenase (NADP(+)).